Here is a 172-residue protein sequence, read N- to C-terminus: Ribosome maturation factor RimM (172 aa).

A PRC barrel domain is found at 92-167 (ENEFYHSDLV…VILKLPEIIG (76 aa)).

This sequence belongs to the RimM family. As to quaternary structure, binds ribosomal protein uS19.

Its subcellular location is the cytoplasm. Its function is as follows. An accessory protein needed during the final step in the assembly of 30S ribosomal subunit, possibly for assembly of the head region. Essential for efficient processing of 16S rRNA. May be needed both before and after RbfA during the maturation of 16S rRNA. It has affinity for free ribosomal 30S subunits but not for 70S ribosomes. This chain is Ribosome maturation factor RimM, found in Ehrlichia ruminantium (strain Gardel).